We begin with the raw amino-acid sequence, 380 residues long: WAT1-related protein At2g37460 (380 aa).

10 helical membrane passes run 16-36, 45-65, 71-91, 107-127, 142-162, 187-207, 216-236, 254-274, 282-302, and 306-326; these read FISM…SKAV, VLVV…AFYF, PKMT…EPVI, FATA…YIFG, VVGT…KGPV, GAVL…LQAI, LSLT…VALV, LTAT…GGVV, FVTA…TIIF, and MYLG…LVIW. Residues 27 to 134 enclose the EamA 1 domain; that stretch reads AGMDILSKAV…IFGLERVKLR (108 aa). An EamA 2 domain is found at 196–325; it reads FSYACFMILQ…VICAGLYLVI (130 aa).

It belongs to the drug/metabolite transporter (DMT) superfamily. Plant drug/metabolite exporter (P-DME) (TC 2.A.7.4) family.

The protein resides in the membrane. The sequence is that of WAT1-related protein At2g37460 from Arabidopsis thaliana (Mouse-ear cress).